The following is a 402-amino-acid chain: Plasminogen activator inhibitor 1 (402 aa).

Positions 1–23 (MRMSLVFACLAMGLALTFAEGSA) are cleaved as a signal peptide. 3 N-linked (GlcNAc...) asparagine glycosylation sites follow: Asn232, Asn288, and Asn352.

It belongs to the serpin family. As to quaternary structure, forms a heterodimer with TMPRSS7. Interacts with VTN. Binds LRP1B; binding is followed by internalization and degradation. Interacts with PPP1CB. In complex with PLAU/uPA, interacts with PLAUR/uPAR. Interacts with SORL1 and LRP1, either alone or in complex with PLAU; these interactions are abolished in the presence of LRPAP1/RAP. The ternary complex composed of PLAUR-PLAU-PAI1 also interacts with SORL1. Interacts with PLAT/tPA. Also interacts with SORL1, when complexed to PLAT/tPA.

It is found in the secreted. In terms of biological role, serine protease inhibitor. Inhibits TMPRSS7. Is a primary inhibitor of tissue-type plasminogen activator (PLAT) and urokinase-type plasminogen activator (PLAU). As PLAT inhibitor, it is required for fibrinolysis down-regulation and is responsible for the controlled degradation of blood clots. As PLAU inhibitor, it is involved in the regulation of cell adhesion and spreading. Acts as a regulator of cell migration, independently of its role as protease inhibitor. It is required for stimulation of keratinocyte migration during cutaneous injury repair. It is involved in cellular and replicative senescence. Plays a role in alveolar type 2 cells senescence in the lung. Is involved in the regulation of cementogenic differentiation of periodontal ligament stem cells, and regulates odontoblast differentiation and dentin formation during odontogenesis. This is Plasminogen activator inhibitor 1 (SERPINE1) from Sus scrofa (Pig).